The following is a 291-amino-acid chain: ATP synthase gamma chain (291 aa).

The protein belongs to the ATPase gamma chain family. As to quaternary structure, F-type ATPases have 2 components, CF(1) - the catalytic core - and CF(0) - the membrane proton channel. CF(1) has five subunits: alpha(3), beta(3), gamma(1), delta(1), epsilon(1). CF(0) has three main subunits: a, b and c.

It localises to the cell inner membrane. Functionally, produces ATP from ADP in the presence of a proton gradient across the membrane. The gamma chain is believed to be important in regulating ATPase activity and the flow of protons through the CF(0) complex. The protein is ATP synthase gamma chain of Neisseria gonorrhoeae (strain NCCP11945).